The primary structure comprises 252 residues: Imidazole glycerol phosphate synthase subunit HisF (252 aa).

Active-site residues include Asp-11 and Asp-130.

The protein belongs to the HisA/HisF family. In terms of assembly, heterodimer of HisH and HisF.

The protein resides in the cytoplasm. The catalysed reaction is 5-[(5-phospho-1-deoxy-D-ribulos-1-ylimino)methylamino]-1-(5-phospho-beta-D-ribosyl)imidazole-4-carboxamide + L-glutamine = D-erythro-1-(imidazol-4-yl)glycerol 3-phosphate + 5-amino-1-(5-phospho-beta-D-ribosyl)imidazole-4-carboxamide + L-glutamate + H(+). It functions in the pathway amino-acid biosynthesis; L-histidine biosynthesis; L-histidine from 5-phospho-alpha-D-ribose 1-diphosphate: step 5/9. IGPS catalyzes the conversion of PRFAR and glutamine to IGP, AICAR and glutamate. The HisF subunit catalyzes the cyclization activity that produces IGP and AICAR from PRFAR using the ammonia provided by the HisH subunit. This is Imidazole glycerol phosphate synthase subunit HisF from Bacillus cytotoxicus (strain DSM 22905 / CIP 110041 / 391-98 / NVH 391-98).